The sequence spans 318 residues: Glutathione synthetase (318 aa).

Residues 125–311 enclose the ATP-grasp domain; it reads EKLFTAWFPE…ITGKLMDAIE (187 aa). An ATP-binding site is contributed by 151–208; it reads FRQEHGDIILKPLDGMGGASIFRVKENDPNVSVIIETLTNHGQNYAMAQTFVPDISNG. Mg(2+) is bound by residues glutamate 282 and asparagine 284.

It belongs to the prokaryotic GSH synthase family. Requires Mg(2+) as cofactor. Mn(2+) is required as a cofactor.

The catalysed reaction is gamma-L-glutamyl-L-cysteine + glycine + ATP = glutathione + ADP + phosphate + H(+). The protein operates within sulfur metabolism; glutathione biosynthesis; glutathione from L-cysteine and L-glutamate: step 2/2. The polypeptide is Glutathione synthetase (Vibrio vulnificus (strain YJ016)).